The following is a 204-amino-acid chain: MSDLRMTEAFLYMDYLCFRALCCKGPPPARPEYDLVCIGLTGSGKTSLLSKLCSESPDNVVSTTGFSIKAVPFQNAILNVKELGGADNIRKYWSRYYQGSQGVIFVLDSASSEDDLEAARNELHSALQHPQLCTLPFLILANHQDKPAARSVQEIKKYFELEPLARGKRWILQPCSLDDMDALKDSFSQLINLLEEKDHEAIRM.

GTP contacts are provided by residues 39-46, 82-86, and 142-145; these read GLTGSGKT, ELGGA, and NHQD.

It belongs to the small GTPase superfamily. Arf family.

The polypeptide is ADP-ribosylation factor-like protein 15 (ARL15) (Pongo abelii (Sumatran orangutan)).